A 284-amino-acid polypeptide reads, in one-letter code: Isopentenyl-diphosphate Delta-isomerase II, chloroplastic (284 aa).

Residues 1-45 (MSASSLFNLPLIRLRSLALSSSFSSFRFAHRPLSSISPRKLPNFR) constitute a chloroplast transit peptide. A46 is modified (N-acetylalanine). K88 contacts substrate. 2 residues coordinate Mg(2+): H92 and H104. Positions 102 to 254 (LLHRAFSVFL…GLKLSPWFRL (153 aa)) constitute a Nudix hydrolase domain. Substrate-binding residues include R123 and K127. The active site involves C139. S140 is a substrate binding site. The short motif at 140–170 (SHPLYRESELIQDNALGVRNAAQRKLLDELG) is the Nudix box element. The Mg(2+) site is built by E199 and E201. E201 is an active-site residue.

This sequence belongs to the IPP isomerase type 1 family. Mg(2+) serves as cofactor.

Its subcellular location is the plastid. It localises to the chloroplast. It catalyses the reaction isopentenyl diphosphate = dimethylallyl diphosphate. It participates in isoprenoid biosynthesis; dimethylallyl diphosphate biosynthesis; dimethylallyl diphosphate from isopentenyl diphosphate: step 1/1. It functions in the pathway porphyrin-containing compound metabolism; chlorophyll biosynthesis. Catalyzes the 1,3-allylic rearrangement of the homoallylic substrate isopentenyl (IPP) to its highly electrophilic allylic isomer, dimethylallyl diphosphate (DMAPP). This chain is Isopentenyl-diphosphate Delta-isomerase II, chloroplastic (IPP2), found in Arabidopsis thaliana (Mouse-ear cress).